A 146-amino-acid polypeptide reads, in one-letter code: Hemoglobin subunit beta (146 aa).

V1 carries the post-translational modification N-acetylvaline. In terms of domain architecture, Globin spans 2 to 146 (HLTADEKAAV…VATALAHKYH (145 aa)). T12 is subject to Phosphothreonine. S44 bears the Phosphoserine mark. The residue at position 59 (K59) is an N6-acetyllysine. H63 contributes to the heme b binding site. An N6-acetyllysine modification is found at K82. H92 contacts heme b. The residue at position 93 (C93) is an S-nitrosocysteine. The residue at position 144 (K144) is an N6-acetyllysine.

The protein belongs to the globin family. As to quaternary structure, heterotetramer of two alpha chains and two beta chains. In terms of tissue distribution, red blood cells.

Its function is as follows. Involved in oxygen transport from the lung to the various peripheral tissues. The chain is Hemoglobin subunit beta (HBB) from Cephalopachus bancanus (Western tarsier).